The sequence spans 400 residues: Formate-dependent phosphoribosylglycinamide formyltransferase (400 aa).

N(1)-(5-phospho-beta-D-ribosyl)glycinamide contacts are provided by residues 22 to 23 (EL) and Glu82. ATP-binding positions include Arg115, Lys157, 162-167 (SSGKGQ), 197-200 (EGFV), and Glu205. The ATP-grasp domain maps to 120–315 (RLAAETLGVP…EFELHARAIL (196 aa)). Positions 274 and 286 each coordinate Mg(2+). Residues Asp293, Lys362, and 369–370 (RR) each bind N(1)-(5-phospho-beta-D-ribosyl)glycinamide.

It belongs to the PurK/PurT family. As to quaternary structure, homodimer.

It carries out the reaction N(1)-(5-phospho-beta-D-ribosyl)glycinamide + formate + ATP = N(2)-formyl-N(1)-(5-phospho-beta-D-ribosyl)glycinamide + ADP + phosphate + H(+). It functions in the pathway purine metabolism; IMP biosynthesis via de novo pathway; N(2)-formyl-N(1)-(5-phospho-D-ribosyl)glycinamide from N(1)-(5-phospho-D-ribosyl)glycinamide (formate route): step 1/1. In terms of biological role, involved in the de novo purine biosynthesis. Catalyzes the transfer of formate to 5-phospho-ribosyl-glycinamide (GAR), producing 5-phospho-ribosyl-N-formylglycinamide (FGAR). Formate is provided by PurU via hydrolysis of 10-formyl-tetrahydrofolate. This chain is Formate-dependent phosphoribosylglycinamide formyltransferase, found in Mycolicibacterium smegmatis (strain ATCC 700084 / mc(2)155) (Mycobacterium smegmatis).